The following is a 220-amino-acid chain: MTGNASGRKPLNLAATQGGASGRQKKLPAALLFTDTLPDDLVEVGYVGAAYGIRGWIKVQPHADDASALLHARRWWLLRAPPAGVVSAPAQSAEAVSIKISQSREHSGTVVAQPAGVSDRSVAEMLKGRRVWVRRADFPAAEEGEFYWVDLIGCAVVNEQGEALGEVTGLIDNGAHQILQVAYELPDGKAAERLIPFVDAFLRTVDTPARRIVVDWGLDY.

In terms of domain architecture, PRC barrel spans 143–220; it reads EGEFYWVDLI…RIVVDWGLDY (78 aa).

The protein belongs to the RimM family. Binds ribosomal protein uS19.

It localises to the cytoplasm. In terms of biological role, an accessory protein needed during the final step in the assembly of 30S ribosomal subunit, possibly for assembly of the head region. Essential for efficient processing of 16S rRNA. May be needed both before and after RbfA during the maturation of 16S rRNA. It has affinity for free ribosomal 30S subunits but not for 70S ribosomes. The protein is Ribosome maturation factor RimM of Cupriavidus metallidurans (strain ATCC 43123 / DSM 2839 / NBRC 102507 / CH34) (Ralstonia metallidurans).